The sequence spans 369 residues: Probable peptidoglycan glycosyltransferase FtsW (369 aa).

The next 8 helical transmembrane spans lie at 11 to 31, 48 to 68, 77 to 97, 134 to 151, 154 to 174, 177 to 197, 265 to 285, and 306 to 326; these read LLSV…SSSV, NFIH…VPIY, LILC…SNHG, TSTI…KLLL, PDFG…FLIG, FLFL…LIYF, LGYL…FQGM, and ISLL…GILP.

Belongs to the SEDS family. FtsW subfamily.

It localises to the cell inner membrane. It catalyses the reaction [GlcNAc-(1-&gt;4)-Mur2Ac(oyl-L-Ala-gamma-D-Glu-L-Lys-D-Ala-D-Ala)](n)-di-trans,octa-cis-undecaprenyl diphosphate + beta-D-GlcNAc-(1-&gt;4)-Mur2Ac(oyl-L-Ala-gamma-D-Glu-L-Lys-D-Ala-D-Ala)-di-trans,octa-cis-undecaprenyl diphosphate = [GlcNAc-(1-&gt;4)-Mur2Ac(oyl-L-Ala-gamma-D-Glu-L-Lys-D-Ala-D-Ala)](n+1)-di-trans,octa-cis-undecaprenyl diphosphate + di-trans,octa-cis-undecaprenyl diphosphate + H(+). Its pathway is cell wall biogenesis; peptidoglycan biosynthesis. Its function is as follows. Peptidoglycan polymerase that is essential for cell division. The protein is Probable peptidoglycan glycosyltransferase FtsW of Riesia pediculicola (strain USDA).